Consider the following 432-residue polypeptide: Short/branched chain specific acyl-CoA dehydrogenase, mitochondrial (432 aa).

A mitochondrion-targeting transit peptide spans 1–33 (MAVSAFQLWRAGGLLRRNFLTHSSSWKIPPRVL). N6-acetyllysine; alternate is present on lysine 70. N6-succinyllysine; alternate is present on lysine 70. Residues 174 to 183 (FCLSEAGAGS) and 207 to 209 (WIS) contribute to the FAD site. Serine 183 provides a ligand contact to substrate. Position 183 is a phosphoserine (serine 183). Tyrosine 229 provides a ligand contact to substrate. Residue lysine 278 is modified to N6-succinyllysine. Tyrosine 283 provides a ligand contact to substrate. Lysine 284 is subject to N6-acetyllysine; alternate. Lysine 284 is modified (N6-succinyllysine; alternate). 291-294 (NEGR) is a binding site for substrate. FAD-binding positions include arginine 319, glutamine 330, and 387 to 391 (EWMGG). Catalysis depends on glutamate 414, which acts as the Proton acceptor. 416 to 418 (TSN) is a binding site for FAD. Position 426 is an N6-acetyllysine (lysine 426).

Belongs to the acyl-CoA dehydrogenase family. As to quaternary structure, homotetramer. Requires FAD as cofactor. As to expression, ubiquitously expressed.

It localises to the mitochondrion matrix. The catalysed reaction is 2-methylbutanoyl-CoA + oxidized [electron-transfer flavoprotein] + H(+) = (2E)-2-methylbut-2-enoyl-CoA + reduced [electron-transfer flavoprotein]. It carries out the reaction (2S)-2-methylbutanoyl-CoA + oxidized [electron-transfer flavoprotein] + H(+) = (2E)-2-methylbut-2-enoyl-CoA + reduced [electron-transfer flavoprotein]. It catalyses the reaction (2R)-2-methylbutanoyl-CoA + oxidized [electron-transfer flavoprotein] + H(+) = ethylacryloyl-CoA + reduced [electron-transfer flavoprotein]. The enzyme catalyses butanoyl-CoA + oxidized [electron-transfer flavoprotein] + H(+) = (2E)-butenoyl-CoA + reduced [electron-transfer flavoprotein]. The catalysed reaction is 2-methylpropanoyl-CoA + oxidized [electron-transfer flavoprotein] + H(+) = 2-methylpropenoyl-CoA + reduced [electron-transfer flavoprotein]. It carries out the reaction hexanoyl-CoA + oxidized [electron-transfer flavoprotein] + H(+) = (2E)-hexenoyl-CoA + reduced [electron-transfer flavoprotein]. It catalyses the reaction valproyl-CoA + oxidized [electron-transfer flavoprotein] + H(+) = (2E)-2-propylpent-2-enoyl-CoA + reduced [electron-transfer flavoprotein]. Its pathway is lipid metabolism; mitochondrial fatty acid beta-oxidation. It participates in amino-acid degradation; L-isoleucine degradation. Its activity is regulated as follows. Inhibited by N-ethylmaleimide, hydroxymercuribenzoate, methyl mercury iodide and heavy metals such as Hg2+, Cu2+, and Ag2+. In terms of biological role, short and branched chain specific acyl-CoA dehydrogenase that catalyzes the removal of one hydrogen from C-2 and C-3 of the fatty acyl-CoA thioester, resulting in the formation of trans-2-enoyl-CoA. Among the different mitochondrial acyl-CoA dehydrogenases, acts specifically on short and branched chain acyl-CoA derivatives such as (S)-2-methylbutyryl-CoA as well as short straight chain acyl-CoAs such as butyryl-CoA. Plays an important role in the metabolism of L-isoleucine by catalyzing the dehydrogenation of 2-methylbutyryl-CoA, one of the steps of the L-isoleucine catabolic pathway. Can also act on valproyl-CoA, a metabolite of the valproic acid drug. The polypeptide is Short/branched chain specific acyl-CoA dehydrogenase, mitochondrial (Rattus norvegicus (Rat)).